We begin with the raw amino-acid sequence, 346 residues long: Alkanal monooxygenase alpha chain (346 aa).

Heterodimer of an alpha and a beta chain.

It catalyses the reaction a long-chain fatty aldehyde + FMNH2 + O2 = a long-chain fatty acid + hnu + FMN + H2O + 2 H(+). Functionally, light-emitting reaction in luminous bacteria. This chain is Alkanal monooxygenase alpha chain (luxA), found in Photobacterium phosphoreum.